Consider the following 464-residue polypeptide: Fumarate hydratase class II (464 aa).

Substrate-binding positions include 98–100 (SGT), 129–132 (HPND), 139–141 (SSN), and Thr-187. Residue His-188 is the Proton donor/acceptor of the active site. Residue Ser-318 is part of the active site. Substrate-binding positions include Ser-319 and 324-326 (KVN).

Belongs to the class-II fumarase/aspartase family. Fumarase subfamily. As to quaternary structure, homotetramer.

The protein localises to the cytoplasm. The enzyme catalyses (S)-malate = fumarate + H2O. It participates in carbohydrate metabolism; tricarboxylic acid cycle; (S)-malate from fumarate: step 1/1. Involved in the TCA cycle. Catalyzes the stereospecific interconversion of fumarate to L-malate. The chain is Fumarate hydratase class II from Haemophilus influenzae (strain ATCC 51907 / DSM 11121 / KW20 / Rd).